Reading from the N-terminus, the 106-residue chain is Small ribosomal subunit protein uS10 (106 aa).

It belongs to the universal ribosomal protein uS10 family. Part of the 30S ribosomal subunit.

Involved in the binding of tRNA to the ribosomes. The chain is Small ribosomal subunit protein uS10 from Caldicellulosiruptor bescii (strain ATCC BAA-1888 / DSM 6725 / KCTC 15123 / Z-1320) (Anaerocellum thermophilum).